Here is a 179-residue protein sequence, read N- to C-terminus: Large ribosomal subunit protein uL6 (179 aa).

It belongs to the universal ribosomal protein uL6 family. As to quaternary structure, part of the 50S ribosomal subunit.

Its function is as follows. This protein binds to the 23S rRNA, and is important in its secondary structure. It is located near the subunit interface in the base of the L7/L12 stalk, and near the tRNA binding site of the peptidyltransferase center. This is Large ribosomal subunit protein uL6 from Mycobacterium sp. (strain KMS).